Here is a 547-residue protein sequence, read N- to C-terminus: MLRRSLSVVFGRRTIACKSCGIELQNKIKDGPGYFVTPQKAIRPAAKQLELAKQLLYGERLRIEKQLTGPDRNTLEKWKELVPPSCKRCMDALHHNRYDTAEFPEHTLEDVGKGVPRDAVVYHIAPLWQFPMGLDRRVLQSSKKVCVLFSKIDMVVQRPSHMPQDVGAFFQSLLYHDLHVKITNFRFFSALKQWNIQTVRNALSKESYLLGGPNAGKSSLINALMRTVVYESRRLVSSKQSSATPADLPPKAHLDIHSAGVSTIPNFTRQPQQYDIKGKIIHDVPGYRTSKSHTFDFNSMIQKDYLLRLRKSDSKTYLTKKYTSINGTESGRCYTVGGLFYYVPPAQTINQVTRYMPGDPQKFQSIDKGLEVVRDVYSDRWDKETGSHPLAEYIHVNPALGDKNSFVRHVIPPFQGTIEIVMRDVGYLRVVATGSFKFLGLHEIWVPKGIEVSVREPLTDVFRTTIEAYRDSGSVANVAQMIIKRPYISSTYPMAHNETDPLAKMREMYLERTASNLSARRLMNRDPLELISQKQKERVNLYWHYCW.

Residues M1–I22 constitute a mitochondrion transit peptide. Positions E105 to S290 constitute a CP-type G domain.

The protein belongs to the TRAFAC class YlqF/YawG GTPase family. GEP3 subfamily.

Its subcellular location is the mitochondrion. Functionally, may be involved in the mitochondrial lipid metabolism. This Eremothecium gossypii (strain ATCC 10895 / CBS 109.51 / FGSC 9923 / NRRL Y-1056) (Yeast) protein is Genetic interactor of prohibitins 3, mitochondrial (GEP3).